A 188-amino-acid chain; its full sequence is Putative CC-type chemokine FPV060 (188 aa).

Belongs to the intercrine beta (chemokine CC) family. Highly divergent.

The protein is Putative CC-type chemokine FPV060 of Fowlpox virus (strain NVSL) (FPV).